The following is a 513-amino-acid chain: GMP synthase [glutamine-hydrolyzing] (513 aa).

The 190-residue stretch at 9-198 folds into the Glutamine amidotransferase type-1 domain; sequence LILVLDFGSQ…VRRVCDCRGQ (190 aa). Cys-86 (nucleophile) is an active-site residue. Catalysis depends on residues His-172 and Glu-174. The 190-residue stretch at 199 to 388 folds into the GMPS ATP-PPase domain; the sequence is WTMENFIEIE…LGIPEHLVWR (190 aa). ATP is bound at residue 226-232; sequence SGGVDSS.

As to quaternary structure, homodimer.

It carries out the reaction XMP + L-glutamine + ATP + H2O = GMP + L-glutamate + AMP + diphosphate + 2 H(+). It functions in the pathway purine metabolism; GMP biosynthesis; GMP from XMP (L-Gln route): step 1/1. Catalyzes the synthesis of GMP from XMP. The chain is GMP synthase [glutamine-hydrolyzing] from Staphylococcus aureus (strain USA300).